The sequence spans 701 residues: Polyribonucleotide nucleotidyltransferase (701 aa).

The Mg(2+) site is built by Asp487 and Asp493. A KH domain is found at 554–613; sequence PTMIAMKIDTDKIRDVIGKGGATIRAICEETKASIDIEDDGSIKIFGETKEAAEAARQRV. Residues 623–691 enclose the S1 motif domain; it reads GKIYVGKVER…NRGRIKLSIK (69 aa).

This sequence belongs to the polyribonucleotide nucleotidyltransferase family. In terms of assembly, component of the RNA degradosome, which is a multiprotein complex involved in RNA processing and mRNA degradation. Mg(2+) serves as cofactor.

It is found in the cytoplasm. It carries out the reaction RNA(n+1) + phosphate = RNA(n) + a ribonucleoside 5'-diphosphate. Involved in mRNA degradation. Catalyzes the phosphorolysis of single-stranded polyribonucleotides processively in the 3'- to 5'-direction. The sequence is that of Polyribonucleotide nucleotidyltransferase from Pseudomonas putida (strain W619).